We begin with the raw amino-acid sequence, 216 residues long: GTPase IMAP family member GIMD1 (216 aa).

Residues 5–216 (KMIINLAVLG…ENHFQVLSFT (212 aa)) form the AIG1-type G domain. GTP contacts are provided by residues 14-22 (GKTQSGKSS), serine 35, and 147-149 (HAE).

It belongs to the TRAFAC class TrmE-Era-EngA-EngB-Septin-like GTPase superfamily. AIG1/Toc34/Toc159-like paraseptin GTPase family. IAN subfamily.

The polypeptide is GTPase IMAP family member GIMD1 (Gimd1) (Rattus norvegicus (Rat)).